A 490-amino-acid chain; its full sequence is Cysteine desulfurase, mitochondrial (490 aa).

Pyridoxal 5'-phosphate contacts are provided by residues 161–162, N241, Q269, and 289–291; these read AT and SSH. K292 is modified (N6-(pyridoxal phosphate)lysine). Residue T329 participates in pyridoxal 5'-phosphate binding. Catalysis depends on C414, which acts as the Cysteine persulfide intermediate. C414 provides a ligand contact to [2Fe-2S] cluster.

The protein belongs to the class-V pyridoxal-phosphate-dependent aminotransferase family. NifS/IscS subfamily. It depends on pyridoxal 5'-phosphate as a cofactor.

The protein localises to the mitochondrion. It catalyses the reaction (sulfur carrier)-H + L-cysteine = (sulfur carrier)-SH + L-alanine. Functionally, catalyzes the removal of elemental sulfur from cysteine to produce alanine. It supplies the inorganic sulfur for iron-sulfur (Fe-S) clusters. Plays a role in both tRNA-processing and mitochondrial metabolism. Involved in the 2-thio-modification of both 5-carboxymethylaminomethyl-2-thiouridine in mitochondrial tRNAs and 5-methoxycarbonylmethyl-2-thiouridine (mcm5s2U) in cytoplasmic tRNAs. The sequence is that of Cysteine desulfurase, mitochondrial from Eremothecium gossypii (strain ATCC 10895 / CBS 109.51 / FGSC 9923 / NRRL Y-1056) (Yeast).